Here is a 111-residue protein sequence, read N- to C-terminus: UPF0339 protein ACIAD0721 (111 aa).

2 tandem repeats follow at residues 10–58 and 61–109. Residues 89–111 are disordered; it reads SRDKGIESVKNNGTTATVKDLTG.

The protein belongs to the UPF0339 family. Duplicated subfamily.

This Acinetobacter baylyi (strain ATCC 33305 / BD413 / ADP1) protein is UPF0339 protein ACIAD0721.